A 481-amino-acid polypeptide reads, in one-letter code: Cobyric acid synthase (481 aa).

A GATase cobBQ-type domain is found at 244–431 (VLRVVIPVLP…LHGLFDAPEA (188 aa)). Cys325 acts as the Nucleophile in catalysis. His423 is an active-site residue.

Belongs to the CobB/CobQ family. CobQ subfamily.

Its pathway is cofactor biosynthesis; adenosylcobalamin biosynthesis. Catalyzes amidations at positions B, D, E, and G on adenosylcobyrinic A,C-diamide. NH(2) groups are provided by glutamine, and one molecule of ATP is hydrogenolyzed for each amidation. This is Cobyric acid synthase from Ralstonia nicotianae (strain ATCC BAA-1114 / GMI1000) (Ralstonia solanacearum).